Reading from the N-terminus, the 258-residue chain is Regulatory protein RecX (258 aa).

This sequence belongs to the RecX family.

It localises to the cytoplasm. Its function is as follows. Modulates RecA activity. The chain is Regulatory protein RecX from Streptococcus pneumoniae (strain Hungary19A-6).